We begin with the raw amino-acid sequence, 22 residues long: Unknown protein 10 (22 aa).

This chain is Unknown protein 10, found in Pseudotsuga menziesii (Douglas-fir).